The chain runs to 1180 residues: uncharacterized protein (1180 aa).

7 disordered regions span residues 229 to 280 (RQQG…DTSI), 431 to 465 (KQPP…PPLK), 484 to 575 (SRDT…PNMR), 730 to 758 (GRPL…ASRT), 810 to 986 (GKAE…ASWD), 1045 to 1109 (RLQE…ELEM), and 1125 to 1152 (ERLE…QKEE). The span at 269 to 279 (QEDETQAEDTS) shows a compositional bias: acidic residues. Residues 431–443 (KQPPKEKAHRRGA) show a composition bias toward basic residues. Polar residues predominate over residues 486–497 (DTLSPQGSSSLP). Basic residues predominate over residues 509–518 (SKARHTRVHS). 3 stretches are compositionally biased toward basic and acidic residues: residues 730–745 (GRPL…DPEP), 826–837 (SHERDLINEAKR), and 846–856 (TKGPKSEREGK). Residues 872-889 (KAKKKLEKKTRPQRKRTQ) show a composition bias toward basic residues. Residues 937–959 (QESQVSLDGRSSPSQIATVTGNM) show a composition bias toward polar residues. 3 stretches are compositionally biased toward basic and acidic residues: residues 960-986 (ESKE…ASWD), 1045-1106 (RLQE…RQEE), and 1127-1152 (LEYQ…QKEE). The stretch at 988-1171 (LRAERAEMRW…ATKQAQEQAR (184 aa)) forms a coiled coil.

This is an uncharacterized protein from Homo sapiens (Human).